The sequence spans 256 residues: Major prion protein (256 aa).

An N-terminal signal peptide occupies residues 1-24; it reads MVKSHIGSWILVLFVAMWSDVGLC. The segment at 25-233 is interaction with GRB2, ERI3 and SYN1; sequence KKRPKPGGGW…ESQAYYQRGA (209 aa). The disordered stretch occupies residues 28 to 110; it reads PKPGGGWNTG…QWNKPSKPKT (83 aa). Repeat copies occupy residues 54-62, 63-70, 71-78, 79-86, and 87-95. The 5 X 8 AA tandem repeats of P-H-G-G-G-W-G-Q stretch occupies residues 54–95; sequence PQGAGGWGQPHGGGWGQPHGGGWGQPHGGGWGQPHGGGGWGQ. A compositionally biased stretch (gly residues) spans 56–97; sequence GAGGWGQPHGGGWGQPHGGGWGQPHGGGWGQPHGGGGWGQGG. Cu(2+)-binding residues include H64, G65, G66, H72, G73, G74, H80, G81, G82, H88, G90, and G91. C182 and C217 are joined by a disulfide. N184 and N200 each carry an N-linked (GlcNAc...) asparagine glycan. A lipid anchor (GPI-anchor amidated alanine) is attached at A233. A propeptide spans 234 to 256 (removed in mature form); it reads SVILFSSPPVILLISFLIFLIVG.

This sequence belongs to the prion family. Monomer and homodimer. Has a tendency to aggregate into amyloid fibrils containing a cross-beta spine, formed by a steric zipper of superposed beta-strands. Soluble oligomers may represent an intermediate stage on the path to fibril formation. Copper binding may promote oligomerization. Interacts with GRB2, APP, ERI3/PRNPIP and SYN1. Mislocalized cytosolically exposed PrP interacts with MGRN1; this interaction alters MGRN1 subcellular location and causes lysosomal enlargement. Interacts with KIAA1191.

Its subcellular location is the cell membrane. It localises to the golgi apparatus. Its primary physiological function is unclear. Has cytoprotective activity against internal or environmental stresses. May play a role in neuronal development and synaptic plasticity. May be required for neuronal myelin sheath maintenance. May play a role in iron uptake and iron homeostasis. Soluble oligomers are toxic to cultured neuroblastoma cells and induce apoptosis (in vitro). Association with GPC1 (via its heparan sulfate chains) targets PRNP to lipid rafts. Also provides Cu(2+) or Zn(2+) for the ascorbate-mediated GPC1 deaminase degradation of its heparan sulfate side chains. In Moschus chrysogaster (Alpine musk deer), this protein is Major prion protein (PRNP).